Consider the following 359-residue polypeptide: Acetoin catabolism protein X (359 aa).

The protein localises to the cell membrane. Its pathway is ketone degradation; acetoin degradation. Essential for acetoin catabolism. The protein is Acetoin catabolism protein X (acoX) of Cupriavidus necator (strain ATCC 17699 / DSM 428 / KCTC 22496 / NCIMB 10442 / H16 / Stanier 337) (Ralstonia eutropha).